Here is a 335-residue protein sequence, read N- to C-terminus: Deoxyhypusine hydroxylase (335 aa).

5 HEAT-like PBS-type repeats span residues 71–97 (LKHE…VAKD), 104–130 (CRHE…LRDN), 200–233 (LRYR…GLKD), 238–264 (FRHE…ALSN), and 271–298 (VRHE…FLND). 4 residues coordinate Fe cation: histidine 73, glutamate 74, histidine 106, and glutamate 107. Fe cation-binding residues include histidine 240, glutamate 241, histidine 273, and glutamate 274.

This sequence belongs to the deoxyhypusine hydroxylase family. The cofactor is Fe(2+).

The protein resides in the cytoplasm. Its subcellular location is the nucleus. The catalysed reaction is [eIF5A protein]-deoxyhypusine + AH2 + O2 = [eIF5A protein]-hypusine + A + H2O. Its pathway is protein modification; eIF5A hypusination. Functionally, catalyzes the hydroxylation of the N(6)-(4-aminobutyl)-L-lysine intermediate to form hypusine, an essential post-translational modification only found in mature eIF-5A factor. This Aspergillus fumigatus (strain ATCC MYA-4609 / CBS 101355 / FGSC A1100 / Af293) (Neosartorya fumigata) protein is Deoxyhypusine hydroxylase (lia1).